Reading from the N-terminus, the 448-residue chain is Probable glycine dehydrogenase (decarboxylating) subunit 1 (448 aa).

The protein belongs to the GcvP family. N-terminal subunit subfamily. The glycine cleavage system is composed of four proteins: P, T, L and H. In this organism, the P 'protein' is a heterodimer of two subunits.

The enzyme catalyses N(6)-[(R)-lipoyl]-L-lysyl-[glycine-cleavage complex H protein] + glycine + H(+) = N(6)-[(R)-S(8)-aminomethyldihydrolipoyl]-L-lysyl-[glycine-cleavage complex H protein] + CO2. Its function is as follows. The glycine cleavage system catalyzes the degradation of glycine. The P protein binds the alpha-amino group of glycine through its pyridoxal phosphate cofactor; CO(2) is released and the remaining methylamine moiety is then transferred to the lipoamide cofactor of the H protein. In Bacillus velezensis (strain DSM 23117 / BGSC 10A6 / LMG 26770 / FZB42) (Bacillus amyloliquefaciens subsp. plantarum), this protein is Probable glycine dehydrogenase (decarboxylating) subunit 1.